The following is a 202-amino-acid chain: Peptide methionine sulfoxide reductase B2, chloroplastic (202 aa).

A chloroplast-targeting transit peptide spans 1–63 (MAFNIITPGR…RRGFHGGRIV (63 aa)). The 122-residue stretch at 77 to 198 (EEEWRAILSP…NSISLKFTPE (122 aa)) folds into the MsrB domain. Residues C116, C119, C162, and C165 each contribute to the Zn(2+) site. Residues C134 and C187 are joined by a disulfide bond. C187 acts as the Nucleophile in catalysis.

It belongs to the MsrB Met sulfoxide reductase family. Zn(2+) is required as a cofactor. In terms of tissue distribution, expressed in stems, young leaves, floral buds and flowers. Expressed at low levels in roots, mature leaves and siliques (at protein level).

It localises to the plastid. The protein resides in the chloroplast. It catalyses the reaction L-methionyl-[protein] + [thioredoxin]-disulfide + H2O = L-methionyl-(R)-S-oxide-[protein] + [thioredoxin]-dithiol. Its function is as follows. Catalyzes the reduction of methionine sulfoxide (MetSO) to methionine in proteins. Specifically reduces the MetSO R-enantiomer. Plays a protective role against oxidative stress by restoring activity to proteins that have been inactivated by methionine oxidation. May play an essential function in association with MSRB1 in maintaining vegetative growth during environmental constraints, through the preservation of photosynthetic antennae. MSRB1 and MSRB2 account for most of the leaf peptide MSR capacity. The polypeptide is Peptide methionine sulfoxide reductase B2, chloroplastic (Arabidopsis thaliana (Mouse-ear cress)).